The following is a 156-amino-acid chain: SPbeta prophage-derived uncharacterized protein YosH (156 aa).

The chain is SPbeta prophage-derived uncharacterized protein YosH (yosH) from Bacillus subtilis (strain 168).